A 132-amino-acid polypeptide reads, in one-letter code: Small ribosomal subunit protein uS9 (132 aa).

Positions 101–132 (KRAGLLTRDPRMKERKKPGLKAARRSPQFSKR) are disordered. The segment covering 113–132 (KERKKPGLKAARRSPQFSKR) has biased composition (basic residues).

It belongs to the universal ribosomal protein uS9 family.

This chain is Small ribosomal subunit protein uS9, found in Staphylococcus aureus (strain USA300).